The primary structure comprises 199 residues: UPF0056 membrane protein bbp_399 (199 aa).

The next 6 membrane-spanning stretches (helical) occupy residues 7 to 29, 39 to 58, 71 to 93, 108 to 130, 137 to 156, and 176 to 198; these read VTILLILIMDPLGNLPIFMSILK, ILIREMMIALLIMLLFLFAG, TVSVSGGIILFLIAIKMIFPTYE, FLVPLAIPLVAGPSLLATLMLLS, ILYLIGSLLIAWMITVVILL, and LMGLILIMLSTQMFLDGIKSWFY.

The protein belongs to the UPF0056 (MarC) family.

The protein localises to the cell membrane. The protein is UPF0056 membrane protein bbp_399 of Buchnera aphidicola subsp. Baizongia pistaciae (strain Bp).